A 297-amino-acid chain; its full sequence is Phosphatidylserine decarboxylase proenzyme (297 aa).

Residues D112, H168, and S255 each act as charge relay system; for autoendoproteolytic cleavage activity in the active site. Residue S255 is the Schiff-base intermediate with substrate; via pyruvic acid; for decarboxylase activity of the active site. S255 is subject to Pyruvic acid (Ser); by autocatalysis.

Belongs to the phosphatidylserine decarboxylase family. PSD-B subfamily. Prokaryotic type II sub-subfamily. In terms of assembly, heterodimer of a large membrane-associated beta subunit and a small pyruvoyl-containing alpha subunit. Requires pyruvate as cofactor. In terms of processing, is synthesized initially as an inactive proenzyme. Formation of the active enzyme involves a self-maturation process in which the active site pyruvoyl group is generated from an internal serine residue via an autocatalytic post-translational modification. Two non-identical subunits are generated from the proenzyme in this reaction, and the pyruvate is formed at the N-terminus of the alpha chain, which is derived from the carboxyl end of the proenzyme. The autoendoproteolytic cleavage occurs by a canonical serine protease mechanism, in which the side chain hydroxyl group of the serine supplies its oxygen atom to form the C-terminus of the beta chain, while the remainder of the serine residue undergoes an oxidative deamination to produce ammonia and the pyruvoyl prosthetic group on the alpha chain. During this reaction, the Ser that is part of the protease active site of the proenzyme becomes the pyruvoyl prosthetic group, which constitutes an essential element of the active site of the mature decarboxylase.

The protein resides in the cell membrane. It carries out the reaction a 1,2-diacyl-sn-glycero-3-phospho-L-serine + H(+) = a 1,2-diacyl-sn-glycero-3-phosphoethanolamine + CO2. It participates in phospholipid metabolism; phosphatidylethanolamine biosynthesis; phosphatidylethanolamine from CDP-diacylglycerol: step 2/2. Catalyzes the formation of phosphatidylethanolamine (PtdEtn) from phosphatidylserine (PtdSer). This Clostridium tetani (strain Massachusetts / E88) protein is Phosphatidylserine decarboxylase proenzyme.